A 162-amino-acid polypeptide reads, in one-letter code: Allophycocyanin alpha-B chain (162 aa).

Asparagine 71 carries the post-translational modification N4-methylasparagine. Cysteine 81 serves as a coordination point for (2R,3E)-phycocyanobilin.

It belongs to the phycobiliprotein family. In terms of processing, contains one covalently linked phycocyanobilin chromophore.

The protein resides in the plastid. It is found in the cyanelle thylakoid membrane. Allophycocyanin is a photosynthetic bile pigment-protein complex with maximum absorption at approximately 650 nanometers. The chain is Allophycocyanin alpha-B chain (apcD) from Cyanophora paradoxa.